The chain runs to 395 residues: Succinyl-diaminopimelate desuccinylase (395 aa).

His74 provides a ligand contact to Zn(2+). Residue Asp76 is part of the active site. Asp107 serves as a coordination point for Zn(2+). Glu141 (proton acceptor) is an active-site residue. 3 residues coordinate Zn(2+): Glu142, Glu170, and His368.

It belongs to the peptidase M20A family. DapE subfamily. Homodimer. The cofactor is Zn(2+). Co(2+) serves as cofactor.

It catalyses the reaction N-succinyl-(2S,6S)-2,6-diaminopimelate + H2O = (2S,6S)-2,6-diaminopimelate + succinate. It participates in amino-acid biosynthesis; L-lysine biosynthesis via DAP pathway; LL-2,6-diaminopimelate from (S)-tetrahydrodipicolinate (succinylase route): step 3/3. Its function is as follows. Catalyzes the hydrolysis of N-succinyl-L,L-diaminopimelic acid (SDAP), forming succinate and LL-2,6-diaminopimelate (DAP), an intermediate involved in the bacterial biosynthesis of lysine and meso-diaminopimelic acid, an essential component of bacterial cell walls. This Brucella anthropi (strain ATCC 49188 / DSM 6882 / CCUG 24695 / JCM 21032 / LMG 3331 / NBRC 15819 / NCTC 12168 / Alc 37) (Ochrobactrum anthropi) protein is Succinyl-diaminopimelate desuccinylase.